Here is a 182-residue protein sequence, read N- to C-terminus: ATP synthase subunit delta (182 aa).

Belongs to the ATPase delta chain family. As to quaternary structure, F-type ATPases have 2 components, F(1) - the catalytic core - and F(0) - the membrane proton channel. F(1) has five subunits: alpha(3), beta(3), gamma(1), delta(1), epsilon(1). CF(0) has four main subunits: a(1), b(1), b'(1) and c(10-14). The alpha and beta chains form an alternating ring which encloses part of the gamma chain. F(1) is attached to F(0) by a central stalk formed by the gamma and epsilon chains, while a peripheral stalk is formed by the delta, b and b' chains.

Its subcellular location is the cellular thylakoid membrane. In terms of biological role, f(1)F(0) ATP synthase produces ATP from ADP in the presence of a proton or sodium gradient. F-type ATPases consist of two structural domains, F(1) containing the extramembraneous catalytic core and F(0) containing the membrane proton channel, linked together by a central stalk and a peripheral stalk. During catalysis, ATP synthesis in the catalytic domain of F(1) is coupled via a rotary mechanism of the central stalk subunits to proton translocation. Its function is as follows. This protein is part of the stalk that links CF(0) to CF(1). It either transmits conformational changes from CF(0) to CF(1) or is implicated in proton conduction. The polypeptide is ATP synthase subunit delta (Synechococcus sp. (strain CC9605)).